We begin with the raw amino-acid sequence, 406 residues long: 4-hydroxy-3-methylbut-2-en-1-yl diphosphate synthase (ferredoxin) (406 aa).

The [4Fe-4S] cluster site is built by cysteine 315, cysteine 318, cysteine 349, and glutamate 356.

This sequence belongs to the IspG family. [4Fe-4S] cluster serves as cofactor.

It carries out the reaction (2E)-4-hydroxy-3-methylbut-2-enyl diphosphate + 2 oxidized [2Fe-2S]-[ferredoxin] + H2O = 2-C-methyl-D-erythritol 2,4-cyclic diphosphate + 2 reduced [2Fe-2S]-[ferredoxin] + H(+). It participates in isoprenoid biosynthesis; isopentenyl diphosphate biosynthesis via DXP pathway; isopentenyl diphosphate from 1-deoxy-D-xylulose 5-phosphate: step 5/6. Functionally, converts 2C-methyl-D-erythritol 2,4-cyclodiphosphate (ME-2,4cPP) into 1-hydroxy-2-methyl-2-(E)-butenyl 4-diphosphate. This Gloeothece citriformis (strain PCC 7424) (Cyanothece sp. (strain PCC 7424)) protein is 4-hydroxy-3-methylbut-2-en-1-yl diphosphate synthase (ferredoxin).